Consider the following 354-residue polypeptide: Probable alcohol acetyltransferase (354 aa).

Active-site charge relay system residues include Ser124 and His293.

It belongs to the AB hydrolase superfamily.

Its function is as follows. Probable alcohol acetyltransferase that uses acetyl-CoA to synthesize acetate esters from various alcohols. Not involved in the synthesis of ethyl acetate. In Cyberlindnera jadinii (strain ATCC 18201 / CBS 1600 / BCRC 20928 / JCM 3617 / NBRC 0987 / NRRL Y-1542) (Torula yeast), this protein is Probable alcohol acetyltransferase (EAT2).